A 268-amino-acid chain; its full sequence is Taurine import ATP-binding protein TauB (268 aa).

Positions 4-236 constitute an ABC transporter domain; the sequence is LSIENISMRF…MGVNADLREV (233 aa). Residue 41–48 participates in ATP binding; that stretch reads GPSGCGKT.

Belongs to the ABC transporter superfamily. Taurine importer (TC 3.A.1.17.1) family. In terms of assembly, the complex is composed of two ATP-binding proteins (TauB), two transmembrane proteins (TauC) and a solute-binding protein (TauA).

It localises to the cell inner membrane. It carries out the reaction taurine(out) + ATP + H2O = taurine(in) + ADP + phosphate + H(+). Functionally, part of the ABC transporter complex TauABC involved in taurine import. Responsible for energy coupling to the transport system. The protein is Taurine import ATP-binding protein TauB of Ruegeria pomeroyi (strain ATCC 700808 / DSM 15171 / DSS-3) (Silicibacter pomeroyi).